The following is a 445-amino-acid chain: Adenine permease AdeP (445 aa).

The Cytoplasmic portion of the chain corresponds to 1–28 (MSHQHTTQTSGQGMLERVFKLREHGTTA). The helical transmembrane segment at 29–52 (RTEVIAGFTTFLTMVYIVFVNPQI) threads the bilayer. At 53-62 (LGVAGMDTSA) the chain is on the periplasmic side. Residues 63 to 81 (VFVTTCLIAAFGSIMMGLF) traverse the membrane as a helical segment. Residues 82-83 (AN) are Cytoplasmic-facing. A discontinuously helical membrane pass occupies residues 84–100 (LPVALAPAMGLNAFFAF). Residues 101-112 (VVVQAMGLPWQV) are Periplasmic-facing. The helical transmembrane segment at 113–132 (GMGAIFWGAIGLLLLTIFRV) threads the bilayer. Topologically, residues 133–144 (RYWMIANIPVSL) are cytoplasmic. A helical transmembrane segment spans residues 145–165 (RVGITSGIGLFIGMMGLKNAG). Topologically, residues 166 to 181 (VIVANPETLVSIGNLT) are periplasmic. Residues 182-199 (SHSVLLGILGFFIIAILA) traverse the membrane as a helical segment. Residues 200–203 (SRNI) lie on the Cytoplasmic side of the membrane. The chain crosses the membrane as a helical span at residues 204 to 222 (HAAVLVSIVVTTLLGWMLG). Residues 223 to 250 (DVHYNGIVSAPPSVMTVVGHVDLAGSFN) lie on the Periplasmic side of the membrane. Residues 251–279 (LGLAGVIFSFMLVNLFDSSGTLIGVTDKA) traverse the membrane as a helical segment. At 280 to 292 (GLADEKGKFPRMK) the chain is on the cytoplasmic side. A helical transmembrane segment spans residues 293–308 (QALYVDSISSVTGSFI). At 309-310 (GT) the chain is on the periplasmic side. A discontinuously helical membrane pass occupies residues 311–326 (SSVTAYIESSSGVSVG). Topologically, residues 327 to 330 (GRTG) are cytoplasmic. A helical transmembrane segment spans residues 331–345 (LTAVVVGLLFLLVIF). Topologically, residues 346 to 356 (LSPLAGMVPGY) are periplasmic. A helical membrane pass occupies residues 357–376 (AAAGALIYVGVLMTSSLARV). Residues 377-381 (NWQDL) lie on the Cytoplasmic side of the membrane. The segment at residues 382 to 417 (TESVPAFITAVMMPFSFSITEGIALGFISYCVMKIG) is an intramembrane region (discontinuously helical). Residues 418–445 (TGRLRDLSPCVIIVALLFILKIVFIDAH) are Cytoplasmic-facing.

It belongs to the nucleobase:cation symporter-2 (NCS2) (TC 2.A.40) family. Azg-like subfamily.

Its subcellular location is the cell inner membrane. With respect to regulation, internal adenine may inhibit transport. Its function is as follows. High-affinity transporter for adenine. This chain is Adenine permease AdeP (adeP), found in Escherichia coli (strain K12).